The following is a 98-amino-acid chain: Protein PROLINE CONTENT ALTERNATIVE 22 (98 aa).

Mainly expressed in flowers, to a lower extent, in roots and, at very low levels, in leaves and stems.

Its subcellular location is the cytoplasm. Functionally, acts as an opponent to RZF1 during early seedling growth in term of proline accumulation in response to dehydration and abscisic acid (ABA). Confers sensitivity to abiotic stresses such as ABA, drought and osmotic stress (e.g. mannitol treatment) by preventing proline accumulation and by reducing the expression of dehydration-inducible genes. Promotes the production of lipid peroxidation by drought stress thus leading to malondialdehyde (MDA) synthesis. Prevents pollen tube elongation. Necessary for RZF1 expression in seedlings. This is Protein PROLINE CONTENT ALTERNATIVE 22 from Arabidopsis thaliana (Mouse-ear cress).